We begin with the raw amino-acid sequence, 623 residues long: Protein FAM234B (623 aa).

The segment at 1 to 82 is disordered; it reads MATVLSRALK…TSERAPEGYP (82 aa). The helical transmembrane segment at 104-124 threads the bilayer; the sequence is AVFLLTVVISMILVLVCAFLI.

This sequence belongs to the FAM234 family.

It localises to the membrane. Its subcellular location is the golgi outpost. The protein resides in the cytoplasm. The protein localises to the cytoskeleton. It is found in the microtubule organizing center. The sequence is that of Protein FAM234B (FAM234B) from Gallus gallus (Chicken).